The primary structure comprises 112 residues: Nitrogen regulatory protein GlnK1 (112 aa).

T29 contributes to the ADP binding site. Residues T29 and V38 each contribute to the ATP site. 52 to 54 is a binding site for 2-oxoglutarate; sequence IVD. ADP-binding positions include V64, 88–90, and 101–103; these read DGK and RVR. Residues V64, 86–90, and 101–103 contribute to the ATP site; these read PGDGK and RVR.

It belongs to the P(II) protein family. Homotrimer. Interacts and forms a complex with Amt1.

The protein localises to the cytoplasm. Its activity is regulated as follows. Formation of the GlnK1/Amt1 complex is decreased in the presence of Mg-ATP or 2-oxoglutarate. The presence of both effectors abolishes the formation of the complex. Its function is as follows. Involved in the regulation of nitrogen metabolism. Regulates the activity of its targets by protein-protein interaction in response to the nitrogen status of the cell. Regulates the activity of the ammonia channel Amt1 via direct interaction. This chain is Nitrogen regulatory protein GlnK1, found in Methanocaldococcus jannaschii (strain ATCC 43067 / DSM 2661 / JAL-1 / JCM 10045 / NBRC 100440) (Methanococcus jannaschii).